The sequence spans 405 residues: Glyceraldehyde-3-phosphate dehydrogenase A, chloroplastic (405 aa).

The N-terminal 68 residues, Met-1–Ala-68, are a transit peptide targeting the chloroplast. NADP(+) is bound by residues Arg-80–Ile-81, Asp-104, and Arg-149. Residues Ser-221 to Thr-223, Thr-252, Arg-267, Thr-280 to Gly-281, and Arg-303 contribute to the D-glyceraldehyde 3-phosphate site. The active-site Nucleophile is the Cys-222. Asn-385 is an NADP(+) binding site.

This sequence belongs to the glyceraldehyde-3-phosphate dehydrogenase family. In terms of assembly, tetramer of either four A chains (GAPDH 2) or two A and two B chains (GAPDH 1).

Its subcellular location is the plastid. It localises to the chloroplast. It catalyses the reaction D-glyceraldehyde 3-phosphate + phosphate + NADP(+) = (2R)-3-phospho-glyceroyl phosphate + NADPH + H(+). The protein operates within carbohydrate biosynthesis; Calvin cycle. This chain is Glyceraldehyde-3-phosphate dehydrogenase A, chloroplastic (GAPA), found in Pisum sativum (Garden pea).